Reading from the N-terminus, the 929-residue chain is Isoleucine--tRNA ligase (929 aa).

The 'HIGH' region signature appears at 58–68; sequence PYANGDIHIGH. Residue Glu-563 coordinates L-isoleucyl-5'-AMP. The short motif at 605 to 609 is the 'KMSKS' region element; it reads KMSKS. ATP is bound at residue Lys-608. Zn(2+) contacts are provided by Cys-892, Cys-895, Cys-912, and Cys-915.

It belongs to the class-I aminoacyl-tRNA synthetase family. IleS type 1 subfamily. As to quaternary structure, monomer. The cofactor is Zn(2+).

Its subcellular location is the cytoplasm. The catalysed reaction is tRNA(Ile) + L-isoleucine + ATP = L-isoleucyl-tRNA(Ile) + AMP + diphosphate. Its function is as follows. Catalyzes the attachment of isoleucine to tRNA(Ile). As IleRS can inadvertently accommodate and process structurally similar amino acids such as valine, to avoid such errors it has two additional distinct tRNA(Ile)-dependent editing activities. One activity is designated as 'pretransfer' editing and involves the hydrolysis of activated Val-AMP. The other activity is designated 'posttransfer' editing and involves deacylation of mischarged Val-tRNA(Ile). The protein is Isoleucine--tRNA ligase of Neisseria meningitidis serogroup C / serotype 2a (strain ATCC 700532 / DSM 15464 / FAM18).